Reading from the N-terminus, the 349-residue chain is Flap endonuclease 1 (349 aa).

Residues 1 to 98 (MDLADLVKDV…EELERRRKAK (98 aa)) are N-domain. Positions 27, 80, 152, 154, 173, 175, and 236 each coordinate Mg(2+). An I-domain region spans residues 116-258 (ELRKYSQAIL…RALKIIKKYG (143 aa)). Residues 341-349 (RQTGLDRWF) are interaction with PCNA.

It belongs to the XPG/RAD2 endonuclease family. FEN1 subfamily. As to quaternary structure, interacts with PCNA via subunit PCNA1. The cofactor is Mg(2+).

Heterotrimeric PCNA stimulates the nuclease activity without altering cleavage specificity. Structure-specific nuclease with 5'-flap endonuclease and 5'-3' exonuclease activities involved in DNA replication and repair. During DNA replication, cleaves the 5'-overhanging flap structure that is generated by displacement synthesis when DNA polymerase encounters the 5'-end of a downstream Okazaki fragment. Binds the unpaired 3'-DNA end and kinks the DNA to facilitate 5' cleavage specificity. Cleaves one nucleotide into the double-stranded DNA from the junction in flap DNA, leaving a nick for ligation. Also involved in the base excision repair (BER) pathway. Acts as a genome stabilization factor that prevents flaps from equilibrating into structures that lead to duplications and deletions. Also possesses 5'-3' exonuclease activity on nicked or gapped double-stranded DNA. DNA polymerase I, DNA ligase and the flap endonuclease may be constitutively associated with the PCNA heterotrimer forming a scanning complex able to couple DNA synthesis and Okazaki fragment maturation. The chain is Flap endonuclease 1 from Saccharolobus solfataricus (strain ATCC 35092 / DSM 1617 / JCM 11322 / P2) (Sulfolobus solfataricus).